A 515-amino-acid polypeptide reads, in one-letter code: 2,3-bisphosphoglycerate-independent phosphoglycerate mutase (515 aa).

Residues Asp-14 and Ser-64 each contribute to the Mn(2+) site. Ser-64 serves as the catalytic Phosphoserine intermediate. Residues His-125, 155–156 (RD), Arg-187, Arg-193, 263–266 (RADR), and Lys-337 contribute to the substrate site. Mn(2+) contacts are provided by Asp-404, His-408, Asp-445, His-446, and His-464.

It belongs to the BPG-independent phosphoglycerate mutase family. Monomer. Mn(2+) serves as cofactor.

The enzyme catalyses (2R)-2-phosphoglycerate = (2R)-3-phosphoglycerate. Its pathway is carbohydrate degradation; glycolysis; pyruvate from D-glyceraldehyde 3-phosphate: step 3/5. Catalyzes the interconversion of 2-phosphoglycerate and 3-phosphoglycerate. The polypeptide is 2,3-bisphosphoglycerate-independent phosphoglycerate mutase (Pseudomonas aeruginosa (strain ATCC 15692 / DSM 22644 / CIP 104116 / JCM 14847 / LMG 12228 / 1C / PRS 101 / PAO1)).